Reading from the N-terminus, the 108-residue chain is MIPGEIITPDGEIELNAGRNTVKLSVANAGDRPIQVGSHFHFYEVNHGLIFDRELALGMRLDIPAGTAVRFEPGDEKEVTLVPLVGSREVYGFNGRVNGEINAEGRGG.

This sequence belongs to the urease beta subunit family. In terms of assembly, heterotrimer of UreA (gamma), UreB (beta) and UreC (alpha) subunits. Three heterotrimers associate to form the active enzyme.

The protein resides in the cytoplasm. It catalyses the reaction urea + 2 H2O + H(+) = hydrogencarbonate + 2 NH4(+). Its pathway is nitrogen metabolism; urea degradation; CO(2) and NH(3) from urea (urease route): step 1/1. The polypeptide is Urease subunit beta (Trichormus variabilis (strain ATCC 29413 / PCC 7937) (Anabaena variabilis)).